The primary structure comprises 249 residues: Triosephosphate isomerase (249 aa).

11–13 (NWK) contributes to the substrate binding site. The Electrophile role is filled by His-91. The Proton acceptor role is filled by Glu-163. Substrate is bound by residues Gly-169, Ser-208, and 229 to 230 (GG).

Belongs to the triosephosphate isomerase family. As to quaternary structure, homodimer.

It localises to the cytoplasm. The catalysed reaction is D-glyceraldehyde 3-phosphate = dihydroxyacetone phosphate. Its pathway is carbohydrate biosynthesis; gluconeogenesis. It functions in the pathway carbohydrate degradation; glycolysis; D-glyceraldehyde 3-phosphate from glycerone phosphate: step 1/1. Involved in the gluconeogenesis. Catalyzes stereospecifically the conversion of dihydroxyacetone phosphate (DHAP) to D-glyceraldehyde-3-phosphate (G3P). This chain is Triosephosphate isomerase, found in Pseudoalteromonas translucida (strain TAC 125).